The chain runs to 282 residues: Tyrosine recombinase XerA (282 aa).

Positions 2–79 (EAINEVIEEY…ALRSYFRFEG (78 aa)) constitute a Core-binding (CB) domain. A Tyr recombinase domain is found at 95–271 (SLPKSLTREE…TVEHLRKAQE (177 aa)). Catalysis depends on residues Arg-132, Lys-157, His-223, Arg-226, and His-249. Tyr-258 acts as the O-(3'-phospho-DNA)-tyrosine intermediate in catalysis.

Belongs to the 'phage' integrase family. XerA subfamily.

It localises to the cytoplasm. Functionally, site-specific tyrosine recombinase, which acts by catalyzing the cutting and rejoining of the recombining DNA molecules. The chain is Tyrosine recombinase XerA from Thermococcus onnurineus (strain NA1).